A 629-amino-acid chain; its full sequence is tRNA uridine 5-carboxymethylaminomethyl modification enzyme MnmG (629 aa).

Residues G13–G18, V125, and S180 each bind FAD. G273–F287 provides a ligand contact to NAD(+). Q370 lines the FAD pocket.

This sequence belongs to the MnmG family. In terms of assembly, homodimer. Heterotetramer of two MnmE and two MnmG subunits. FAD is required as a cofactor.

The protein resides in the cytoplasm. In terms of biological role, NAD-binding protein involved in the addition of a carboxymethylaminomethyl (cmnm) group at the wobble position (U34) of certain tRNAs, forming tRNA-cmnm(5)s(2)U34. The protein is tRNA uridine 5-carboxymethylaminomethyl modification enzyme MnmG of Pasteurella multocida (strain Pm70).